The chain runs to 433 residues: Trigger factor (433 aa).

Residues 163 to 248 (GNFVVIDFVG…VKEAKVKELP (86 aa)) enclose the PPIase FKBP-type domain.

This sequence belongs to the FKBP-type PPIase family. Tig subfamily.

Its subcellular location is the cytoplasm. It carries out the reaction [protein]-peptidylproline (omega=180) = [protein]-peptidylproline (omega=0). Functionally, involved in protein export. Acts as a chaperone by maintaining the newly synthesized protein in an open conformation. Functions as a peptidyl-prolyl cis-trans isomerase. The sequence is that of Trigger factor from Geobacter metallireducens (strain ATCC 53774 / DSM 7210 / GS-15).